A 1431-amino-acid chain; its full sequence is Stabilin-2 (1431 aa).

The Extracellular portion of the chain corresponds to S1 to S1322. Positions L2–L130 constitute an FAS1 domain. Residues N112 and N140 are each glycosylated (N-linked (GlcNAc...) asparagine). The Laminin EGF-like 1 domain occupies P207–Q272. 18 disulfide bridges follow: C212-C226, C220-C236, C238-C247, C259-C270, C263-C280, C282-C291, C300-C310, C304-C320, C322-C333, C339-C352, C346-C362, C364-C375, C381-C394, C388-C404, C406-C417, C423-C436, C430-C446, and C448-C459. 2 N-linked (GlcNAc...) asparagine glycosylation sites follow: N231 and N243. 4 consecutive EGF-like domains span residues T296–T334, A335–L376, E377–S418, and L419–R460. The N-linked (GlcNAc...) asparagine glycan is linked to N301. An N-linked (GlcNAc...) asparagine glycan is attached at N329. An N-linked (GlcNAc...) asparagine glycan is attached at N437. 2 consecutive FAS1 domains span residues R460–L588 and V604–L745. N607 carries N-linked (GlcNAc...) asparagine glycosylation. In terms of domain architecture, Laminin EGF-like 2 spans P822–E887. 6 cysteine pairs are disulfide-bonded: C827/C841, C835/C851, C853/C862, C874/C885, C879/C895, and C897/C906. N-linked (GlcNAc...) asparagine glycosylation is present at N858. Residue N929 is glycosylated (N-linked (GlcNAc...) asparagine). EGF-like domains follow at residues V947–I987 and E988–E1030. Disulfide bonds link C951-C964, C958-C973, C975-C986, C992-C1006, C1000-C1016, C1018-C1029, C1085-C1154, and C1109-C1130. Residues G1063 to R1156 enclose the Link domain. 5 N-linked (GlcNAc...) asparagine glycosylation sites follow: N1145, N1161, N1233, N1249, and N1258. The FAS1 4 domain maps to S1176–L1310. Residues G1323–A1343 traverse the membrane as a helical segment. The Cytoplasmic segment spans residues Y1344–R1431. The tract at residues W1368 to S1378 is interaction with TMSB4X.

Interacts with GULP1, heparin, alpha-M/beta-2 integrin (ITGAM and ITGB2), and thymosin beta 4 (TMSB4X). Post-translationally, glycosylated. Proteolytically processed to yield a 175 kDa protein. In terms of tissue distribution, initially expressed in all vascular cells, including those of sinusoidal-like structures, vitellin veins, and hepatic veins or sinus venosus, in E13.5 fetal liver. The expression then progressively disappears in the portal and hepatic veins, but the expression in sinusoidals endothelial cells (SECs) is retained and becomes stronger during development.

The protein localises to the cytoplasm. It localises to the cell membrane. In terms of biological role, phosphatidylserine receptor that enhances the engulfment of apoptotic cells. Hyaluronan receptor that binds to and mediates endocytosis of hyaluronic acid (HA). Also acts, in different species, as a primary systemic scavenger receptor for heparin (Hep), chondroitin sulfate (CS), dermatan sulfate (DS), nonglycosaminoglycan (GAG), acetylated low-density lipoprotein (AcLDL), pro-collagen propeptides and advanced glycation end products (AGE). May serve to maintain tissue integrity by supporting extracellular matrix turnover or it may contribute to maintaining fluidity of bodily liquids by resorption of hyaluronan. Counter receptor which plays an important role in lymphocyte recruitment in the hepatic vasculature. Binds to both Gram-positive and Gram-negative bacteria and may play a role in defense against bacterial infection. The proteolytically processed 175 kDa form also functions as an endocytosis receptor for heparin internalization as well as HA and CS. In Rattus norvegicus (Rat), this protein is Stabilin-2.